We begin with the raw amino-acid sequence, 184 residues long: Orotate phosphoribosyltransferase (184 aa).

5-phospho-alpha-D-ribose 1-diphosphate contacts are provided by residues Arg99, Lys100, Lys103, His105, and 125–133; that span reads EDTTTTGNS. Residues Thr129 and Arg157 each contribute to the orotate site.

Belongs to the purine/pyrimidine phosphoribosyltransferase family. PyrE subfamily. As to quaternary structure, homodimer. Mg(2+) is required as a cofactor.

The enzyme catalyses orotidine 5'-phosphate + diphosphate = orotate + 5-phospho-alpha-D-ribose 1-diphosphate. Its pathway is pyrimidine metabolism; UMP biosynthesis via de novo pathway; UMP from orotate: step 1/2. In terms of biological role, catalyzes the transfer of a ribosyl phosphate group from 5-phosphoribose 1-diphosphate to orotate, leading to the formation of orotidine monophosphate (OMP). The protein is Orotate phosphoribosyltransferase of Corynebacterium glutamicum (strain R).